The following is a 449-amino-acid chain: UDP-N-acetylglucosamine 1-carboxyvinyltransferase (449 aa).

51–52 (KN) is a binding site for phosphoenolpyruvate. Residue arginine 121 participates in UDP-N-acetyl-alpha-D-glucosamine binding. Residue cysteine 145 is the Proton donor of the active site. Cysteine 145 carries the 2-(S-cysteinyl)pyruvic acid O-phosphothioketal modification. UDP-N-acetyl-alpha-D-glucosamine is bound by residues 150–154 (RPVDQ), aspartate 333, and isoleucine 355.

It belongs to the EPSP synthase family. MurA subfamily.

It localises to the cytoplasm. It carries out the reaction phosphoenolpyruvate + UDP-N-acetyl-alpha-D-glucosamine = UDP-N-acetyl-3-O-(1-carboxyvinyl)-alpha-D-glucosamine + phosphate. It functions in the pathway cell wall biogenesis; peptidoglycan biosynthesis. In terms of biological role, cell wall formation. Adds enolpyruvyl to UDP-N-acetylglucosamine. The protein is UDP-N-acetylglucosamine 1-carboxyvinyltransferase of Burkholderia mallei (strain ATCC 23344).